The primary structure comprises 53 residues: uncharacterized protein (53 aa).

The segment at 34–53 (RKEKGKRHAAPLSLMGVHKR) is disordered.

This is an uncharacterized protein from Treponema pallidum (strain Nichols).